The primary structure comprises 272 residues: Shikimate dehydrogenase (NADP(+)) (272 aa).

Residues 14 to 16 (SKS) and T61 contribute to the shikimate site. Catalysis depends on K65, which acts as the Proton acceptor. Position 77 (E77) interacts with NADP(+). The shikimate site is built by N86 and D102. NADP(+)-binding positions include 126–130 (GAGGA), 149–154 (NRTVSR), and M213. Y215 provides a ligand contact to shikimate. Position 237 (G237) interacts with NADP(+).

Belongs to the shikimate dehydrogenase family. As to quaternary structure, homodimer.

The enzyme catalyses shikimate + NADP(+) = 3-dehydroshikimate + NADPH + H(+). The protein operates within metabolic intermediate biosynthesis; chorismate biosynthesis; chorismate from D-erythrose 4-phosphate and phosphoenolpyruvate: step 4/7. In terms of biological role, involved in the biosynthesis of the chorismate, which leads to the biosynthesis of aromatic amino acids. Catalyzes the reversible NADPH linked reduction of 3-dehydroshikimate (DHSA) to yield shikimate (SA). The polypeptide is Shikimate dehydrogenase (NADP(+)) (Escherichia coli O6:K15:H31 (strain 536 / UPEC)).